The primary structure comprises 197 residues: MYEYIKGTYMGINKEYIVIENGDIGYKIHSSGYTIANMPNIGEHIMLYLTQIVREDFIGLYGFGSKEELELFNKLLTVNGIGAKASLSLLSITNVENLKRAIVLEDEKLLIKAPGIGKKTAQRIILELKDKLDVNLDEGIQTDSNDIKVSSKILEEAKEALMSLGYSEKECEKALKNVEEKESLEIIIKESLKFLMN.

A domain I region spans residues 1 to 64; it reads MYEYIKGTYM…EDFIGLYGFG (64 aa). The tract at residues 65-143 is domain II; it reads SKEELELFNK…VNLDEGIQTD (79 aa). The tract at residues 144-149 is flexible linker; it reads SNDIKV. Positions 149–197 are domain III; the sequence is VSSKILEEAKEALMSLGYSEKECEKALKNVEEKESLEIIIKESLKFLMN.

It belongs to the RuvA family. Homotetramer. Forms an RuvA(8)-RuvB(12)-Holliday junction (HJ) complex. HJ DNA is sandwiched between 2 RuvA tetramers; dsDNA enters through RuvA and exits via RuvB. An RuvB hexamer assembles on each DNA strand where it exits the tetramer. Each RuvB hexamer is contacted by two RuvA subunits (via domain III) on 2 adjacent RuvB subunits; this complex drives branch migration. In the full resolvosome a probable DNA-RuvA(4)-RuvB(12)-RuvC(2) complex forms which resolves the HJ.

It is found in the cytoplasm. Functionally, the RuvA-RuvB-RuvC complex processes Holliday junction (HJ) DNA during genetic recombination and DNA repair, while the RuvA-RuvB complex plays an important role in the rescue of blocked DNA replication forks via replication fork reversal (RFR). RuvA specifically binds to HJ cruciform DNA, conferring on it an open structure. The RuvB hexamer acts as an ATP-dependent pump, pulling dsDNA into and through the RuvAB complex. HJ branch migration allows RuvC to scan DNA until it finds its consensus sequence, where it cleaves and resolves the cruciform DNA. The polypeptide is Holliday junction branch migration complex subunit RuvA (Hathewaya histolytica (Clostridium histolyticum)).